Reading from the N-terminus, the 98-residue chain is Aspartyl/glutamyl-tRNA(Asn/Gln) amidotransferase subunit C (98 aa).

This sequence belongs to the GatC family. In terms of assembly, heterotrimer of A, B and C subunits.

It carries out the reaction L-glutamyl-tRNA(Gln) + L-glutamine + ATP + H2O = L-glutaminyl-tRNA(Gln) + L-glutamate + ADP + phosphate + H(+). It catalyses the reaction L-aspartyl-tRNA(Asn) + L-glutamine + ATP + H2O = L-asparaginyl-tRNA(Asn) + L-glutamate + ADP + phosphate + 2 H(+). Allows the formation of correctly charged Asn-tRNA(Asn) or Gln-tRNA(Gln) through the transamidation of misacylated Asp-tRNA(Asn) or Glu-tRNA(Gln) in organisms which lack either or both of asparaginyl-tRNA or glutaminyl-tRNA synthetases. The reaction takes place in the presence of glutamine and ATP through an activated phospho-Asp-tRNA(Asn) or phospho-Glu-tRNA(Gln). This chain is Aspartyl/glutamyl-tRNA(Asn/Gln) amidotransferase subunit C, found in Kocuria rhizophila (strain ATCC 9341 / DSM 348 / NBRC 103217 / DC2201).